Consider the following 119-residue polypeptide: Large ribosomal subunit protein bL19 (119 aa).

Belongs to the bacterial ribosomal protein bL19 family.

This protein is located at the 30S-50S ribosomal subunit interface and may play a role in the structure and function of the aminoacyl-tRNA binding site. In Petrotoga mobilis (strain DSM 10674 / SJ95), this protein is Large ribosomal subunit protein bL19.